Here is a 353-residue protein sequence, read N- to C-terminus: Rhodopsin (353 aa).

The Extracellular portion of the chain corresponds to 1 to 36 (MNGTEGPYFYIPMVNTTGIVRSPYEYPQYYLVNPAA). N-linked (GlcNAc...) asparagine glycosylation is found at N2 and N15. Residues 37–61 (YAALGAYMFLLILVGFPVNFLTLYV) form a helical membrane-spanning segment. The Cytoplasmic segment spans residues 62–73 (TLEHKKLRTPLN). Residues 74 to 96 (YILLNLAVADLFMVLGGFTTTMY) form a helical membrane-spanning segment. At 97–110 (TSMHGYFVLGRLGC) the chain is on the extracellular side. A disulfide bridge connects residues C110 and C187. Residues 111–133 (NVEGFFATLGGEIALWSLVVLAI) traverse the membrane as a helical segment. A 'Ionic lock' involved in activated form stabilization motif is present at residues 134-136 (ERW). The Cytoplasmic portion of the chain corresponds to 134–152 (ERWVVVCKPISNFRFSEDH). Residues 153–173 (AIMGLAFTWVMASACAVPPLV) form a helical membrane-spanning segment. Topologically, residues 174–202 (GWSRYIPEGMQCSCGIDYYTRAEGFNNES) are extracellular. A glycan (N-linked (GlcNAc...) asparagine) is linked at N200. Residues 203-224 (FVIYMFVCHFLIPLVVVFFCYG) traverse the membrane as a helical segment. Residues 225–252 (RLLCAVKEAAAAQQESETTQRAEREVSR) are Cytoplasmic-facing. The helical transmembrane segment at 253–274 (MVVIMVVAFLVCWCPYAGVAWY) threads the bilayer. Residues 275–286 (IFTHQGSEFGPL) are Extracellular-facing. A helical membrane pass occupies residues 287–308 (FMTFPAFFAKSSSIYNPMIYIC). K296 is modified (N6-(retinylidene)lysine). Residues 309-353 (MNKQFRHCMITTLCCGKNPFEEEEGASTTSKTEASSVSSSSVSPA) are Cytoplasmic-facing. 2 S-palmitoyl cysteine lipidation sites follow: C322 and C323. The disordered stretch occupies residues 330–353 (EEEGASTTSKTEASSVSSSSVSPA). Residues 334 to 353 (ASTTSKTEASSVSSSSVSPA) are compositionally biased toward low complexity.

The protein belongs to the G-protein coupled receptor 1 family. Opsin subfamily. In terms of processing, phosphorylated on some or all of the serine and threonine residues present in the C-terminal region. Contains one covalently linked retinal chromophore.

The protein localises to the membrane. Its subcellular location is the cell projection. The protein resides in the cilium. It is found in the photoreceptor outer segment. Its function is as follows. Photoreceptor required for image-forming vision at low light intensity. While most salt water fish species use retinal as chromophore, most freshwater fish use 3-dehydroretinal, or a mixture of retinal and 3-dehydroretinal. Light-induced isomerization of 11-cis to all-trans retinal triggers a conformational change that activates signaling via G-proteins. Subsequent receptor phosphorylation mediates displacement of the bound G-protein alpha subunit by arrestin and terminates signaling. The sequence is that of Rhodopsin (rho) from Chelon labrosus (Thicklip grey mullet).